The primary structure comprises 345 residues: MMNVAIIGATGYSGAELFRLLYGHPHVSQCDVFSSSQDGIHLSESFPHVGAVDGAVLHKLEIEALAKYDAVFFATPPGVSGEWAPALVDRGVKVIDLSGDFRLKDGAVYAQWYGREAAPSAYLERAVYGLTEWNREAVRGAVLLSNPGCYPTATLLGLAPLVKEGLIKEDSIIVDAKSGVSGAGRKAGLGTHFSEVNENVKIYKVNAHQHIPEIEQALQTWNEAVAPITFSTHLIPMTRGIMATIYAKAKQSISPNDLVDLYKTSYEGSPFVRIRQLGQFPATKDVYGSNYCDIGLAYDERTERVTVVSVIDNLMKGAAGQAVQNFNLMMGWDEAEGLRSLPIYP.

The active site involves C149.

This sequence belongs to the NAGSA dehydrogenase family. Type 1 subfamily.

It is found in the cytoplasm. The enzyme catalyses N-acetyl-L-glutamate 5-semialdehyde + phosphate + NADP(+) = N-acetyl-L-glutamyl 5-phosphate + NADPH + H(+). The protein operates within amino-acid biosynthesis; L-arginine biosynthesis; N(2)-acetyl-L-ornithine from L-glutamate: step 3/4. Its function is as follows. Catalyzes the NADPH-dependent reduction of N-acetyl-5-glutamyl phosphate to yield N-acetyl-L-glutamate 5-semialdehyde. The protein is N-acetyl-gamma-glutamyl-phosphate reductase of Geobacillus stearothermophilus (Bacillus stearothermophilus).